The following is a 366-amino-acid chain: Ribosomal RNA large subunit methyltransferase M (366 aa).

S-adenosyl-L-methionine is bound by residues Ser-188, 221–224, Asp-240, Asp-260, and Asp-277; that span reads CPGG. Lys-306 (proton acceptor) is an active-site residue.

It belongs to the class I-like SAM-binding methyltransferase superfamily. RNA methyltransferase RlmE family. RlmM subfamily. As to quaternary structure, monomer.

It localises to the cytoplasm. The catalysed reaction is cytidine(2498) in 23S rRNA + S-adenosyl-L-methionine = 2'-O-methylcytidine(2498) in 23S rRNA + S-adenosyl-L-homocysteine + H(+). Functionally, catalyzes the 2'-O-methylation at nucleotide C2498 in 23S rRNA. The protein is Ribosomal RNA large subunit methyltransferase M of Salmonella newport (strain SL254).